The primary structure comprises 299 residues: N-acetylneuraminate lyase (299 aa).

2 residues coordinate aceneuramate: serine 45 and serine 46. The Proton donor role is filled by tyrosine 134. The active-site Schiff-base intermediate with substrate is lysine 161. Residues threonine 163, glycine 185, aspartate 187, and glutamate 188 each coordinate aceneuramate.

Belongs to the DapA family. NanA subfamily. In terms of assembly, homotetramer.

The protein resides in the cytoplasm. It carries out the reaction aceneuramate = aldehydo-N-acetyl-D-mannosamine + pyruvate. Its pathway is amino-sugar metabolism; N-acetylneuraminate degradation; D-fructose 6-phosphate from N-acetylneuraminate: step 1/5. Its function is as follows. Catalyzes the reversible aldol cleavage of N-acetylneuraminic acid (sialic acid; Neu5Ac) to form pyruvate and N-acetylmannosamine (ManNAc) via a Schiff base intermediate. In Rhizobium meliloti (strain 1021) (Ensifer meliloti), this protein is N-acetylneuraminate lyase.